Reading from the N-terminus, the 160-residue chain is Eosinophil cationic protein (160 aa).

The N-terminal stretch at 1–27 (MVPKLFTSQICLLLLLGLMGVEGSLHA) is a signal peptide. The segment at 28 to 72 (RPPQFTRAQWFAIQHISLNPPRCTIAMRAINNYRWRCKNQNTFLR) is required for nearly all of the bactericidal activity; partially involved in LPS-binding and bacterial membrane depolarization. The active-site Proton acceptor is the His42. 4 disulfide bridges follow: Cys50–Cys110, Cys64–Cys123, Cys82–Cys138, and Cys89–Cys98. Residue Tyr60 is modified to 3'-nitrotyrosine. 65-69 (KNQNT) is a binding site for substrate. Residues Asn84, Asn92, and Asn119 are each glycosylated (N-linked (GlcNAc...) asparagine). The active-site Proton donor is His155.

The protein belongs to the pancreatic ribonuclease family. As to quaternary structure, interacts with bacterial lipopolysaccharide (LPS) and lipoteichoic acid (LTA). In vitro interacts with and insert into lipid bilayers composed of dioleoyl phosphatidylcholine and dioleoyl phosphatidylglycerol. In vitro, tends to form amyloid-like aggregates at pH 3, but not at pH 5, nor 7.

Its subcellular location is the secreted. Functionally, cytotoxin and helminthotoxin with low-efficiency ribonuclease activity. Possesses a wide variety of biological activities. Exhibits antibacterial activity, including cytoplasmic membrane depolarization of preferentially Gram-negative, but also Gram-positive strains. Promotes E.coli outer membrane detachment, alteration of the overall cell shape and partial loss of cell content. This chain is Eosinophil cationic protein (RNASE3), found in Homo sapiens (Human).